We begin with the raw amino-acid sequence, 586 residues long: Kelch-like protein 7 (586 aa).

One can recognise a BTB domain in the interval Cys-44 to Ser-111. In terms of domain architecture, BACK spans Cys-146–Gln-248. 6 Kelch repeats span residues Arg-294–Asn-336, Val-337–Gly-382, Lys-383–Gly-430, Leu-431–Asp-481, Ile-483–Ser-528, and Val-530–Asp-575.

Homodimer. Component of the BCR(KLHL7) E3 ubiquitin ligase complex, at least composed of CUL3 and KLHL7 and RBX1. As to expression, widely expressed, with highest levels in adult and fetal heart, CNS and adult testis.

Its subcellular location is the nucleus. The protein resides in the cytoplasm. Its pathway is protein modification; protein ubiquitination. Its function is as follows. Substrate-specific adapter of a BCR (BTB-CUL3-RBX1) E3 ubiquitin ligase complex. The BCR(KLHL7) complex acts by mediating ubiquitination and subsequent degradation of substrate proteins. Probably mediates 'Lys-48'-linked ubiquitination. This Homo sapiens (Human) protein is Kelch-like protein 7 (KLHL7).